The chain runs to 1010 residues: Antigenic heat-stable 120 kDa protein (1010 aa).

2 disordered regions span residues 1–34 (DTSE…QTTT) and 347–396 (GQSK…QSQQ). Residues 12–27 (EYTEEQKQTLEQEQKE) show a composition bias toward basic and acidic residues. 2 stretches are compositionally biased toward polar residues: residues 347-372 (GQSK…QHKQ) and 379-396 (PTNQ…QSQQ).

The protein localises to the cytoplasm. The sequence is that of Antigenic heat-stable 120 kDa protein (sca4) from Rickettsia parkeri.